The following is a 182-amino-acid chain: Protein GrpE (182 aa).

Residues 1-17 (MEEKKRCEESEKIKEQE) are compositionally biased toward basic and acidic residues. The tract at residues 1-33 (MEEKKRCEESEKIKEQENETLPNEDSPSMGKKV) is disordered.

This sequence belongs to the GrpE family. In terms of assembly, homodimer.

It is found in the cytoplasm. Participates actively in the response to hyperosmotic and heat shock by preventing the aggregation of stress-denatured proteins, in association with DnaK and GrpE. It is the nucleotide exchange factor for DnaK and may function as a thermosensor. Unfolded proteins bind initially to DnaJ; upon interaction with the DnaJ-bound protein, DnaK hydrolyzes its bound ATP, resulting in the formation of a stable complex. GrpE releases ADP from DnaK; ATP binding to DnaK triggers the release of the substrate protein, thus completing the reaction cycle. Several rounds of ATP-dependent interactions between DnaJ, DnaK and GrpE are required for fully efficient folding. The sequence is that of Protein GrpE from Borrelia hermsii (strain HS1 / DAH).